A 298-amino-acid polypeptide reads, in one-letter code: DNA repair protein RecO (298 aa).

It belongs to the RecO family.

Its function is as follows. Involved in DNA repair and RecF pathway recombination. This is DNA repair protein RecO from Cupriavidus metallidurans (strain ATCC 43123 / DSM 2839 / NBRC 102507 / CH34) (Ralstonia metallidurans).